A 360-amino-acid chain; its full sequence is Alpha-methylacyl-CoA racemase (360 aa).

Residues R38, 59–62 (ADLK), 83–85 (GYR), R91, and 125–130 (GHDINY) each bind substrate. Catalysis depends on H126, which acts as the Proton acceptor. The active-site Proton donor is D156.

This sequence belongs to the CoA-transferase III family. Homodimer.

It catalyses the reaction a (2S)-2-methylacyl-CoA = a (2R)-2-methylacyl-CoA. The enzyme catalyses (2S)-2-methyltetradecanoyl-CoA = (2R)-2-methyltetradecanoyl-CoA. It carries out the reaction (2R)-pristanoyl-CoA = (2S)-pristanoyl-CoA. The catalysed reaction is (25S)-3-oxocholest-4-en-26-oyl-CoA = (25R)-3-oxocholest-4-en-26-oyl-CoA. It catalyses the reaction (2S)-ibuprofenoyl-CoA = (2R)-ibuprofenoyl-CoA. Inactivated by N,N-dialkylcarbamoyl-CoA substrate-product analogs. In terms of biological role, catalyzes the epimerization of (2R)- and (2S)-methylacyl-coenzyme A (CoA) thioesters. Accepts as substrates a wide range of alpha-methylacyl-CoAs, including (2R)-2-methylmyristoyl-CoA and (2S)-2-methylmyristoyl-CoA, (2R)-pristanoyl-CoA and (2S)-pristanoyl-CoA, and the cholesterol esters (25R)-3-oxo-cholest-4-en-26-oyl-CoA and (25S)-3-oxo-cholest-4-en-26-oyl-CoA. Can also catalyze the interconversion of the non-physiologic substrates (2R)-ibuprofenoyl-CoA and (2S)-ibuprofenoyl-CoA, which are potential competitive inhibitors of the enzyme. This chain is Alpha-methylacyl-CoA racemase, found in Mycobacterium tuberculosis (strain ATCC 25618 / H37Rv).